We begin with the raw amino-acid sequence, 173 residues long: Translation initiation factor IF-3 (173 aa).

It belongs to the IF-3 family. As to quaternary structure, monomer.

It localises to the cytoplasm. In terms of biological role, IF-3 binds to the 30S ribosomal subunit and shifts the equilibrium between 70S ribosomes and their 50S and 30S subunits in favor of the free subunits, thus enhancing the availability of 30S subunits on which protein synthesis initiation begins. The protein is Translation initiation factor IF-3 of Bartonella bacilliformis (strain ATCC 35685 / KC583 / Herrer 020/F12,63).